The sequence spans 124 residues: Small ribosomal subunit protein uS13 (124 aa).

Positions 93–117 are enriched in basic residues; it reads KNLPVRGQRTRTNARTRKGPRKTVA. Residues 93 to 124 form a disordered region; it reads KNLPVRGQRTRTNARTRKGPRKTVANKKIESK.

Belongs to the universal ribosomal protein uS13 family. As to quaternary structure, part of the 30S ribosomal subunit. Forms a loose heterodimer with protein S19. Forms two bridges to the 50S subunit in the 70S ribosome.

Its function is as follows. Located at the top of the head of the 30S subunit, it contacts several helices of the 16S rRNA. In the 70S ribosome it contacts the 23S rRNA (bridge B1a) and protein L5 of the 50S subunit (bridge B1b), connecting the 2 subunits; these bridges are implicated in subunit movement. Contacts the tRNAs in the A and P-sites. This Mycoplasma genitalium (strain ATCC 33530 / DSM 19775 / NCTC 10195 / G37) (Mycoplasmoides genitalium) protein is Small ribosomal subunit protein uS13.